The following is a 101-amino-acid chain: Co-chaperonin GroES 1 (101 aa).

This sequence belongs to the GroES chaperonin family. Heptamer of 7 subunits arranged in a ring. Interacts with the chaperonin GroEL.

It localises to the cytoplasm. Its function is as follows. Together with the chaperonin GroEL, plays an essential role in assisting protein folding. The GroEL-GroES system forms a nano-cage that allows encapsulation of the non-native substrate proteins and provides a physical environment optimized to promote and accelerate protein folding. GroES binds to the apical surface of the GroEL ring, thereby capping the opening of the GroEL channel. This chain is Co-chaperonin GroES 1, found in Rhodopirellula baltica (strain DSM 10527 / NCIMB 13988 / SH1).